The following is a 330-amino-acid chain: 5-dehydro-2-deoxygluconokinase (330 aa).

The protein belongs to the carbohydrate kinase PfkB family.

The catalysed reaction is 5-dehydro-2-deoxy-D-gluconate + ATP = 6-phospho-5-dehydro-2-deoxy-D-gluconate + ADP + H(+). It participates in polyol metabolism; myo-inositol degradation into acetyl-CoA; acetyl-CoA from myo-inositol: step 5/7. Functionally, catalyzes the phosphorylation of 5-dehydro-2-deoxy-D-gluconate (2-deoxy-5-keto-D-gluconate or DKG) to 6-phospho-5-dehydro-2-deoxy-D-gluconate (DKGP). This is 5-dehydro-2-deoxygluconokinase from Bacillus velezensis (strain DSM 23117 / BGSC 10A6 / LMG 26770 / FZB42) (Bacillus amyloliquefaciens subsp. plantarum).